The chain runs to 290 residues: Elongation factor Ts (290 aa).

The segment at 87-90 (TDFV) is involved in Mg(2+) ion dislocation from EF-Tu.

It belongs to the EF-Ts family.

The protein localises to the cytoplasm. Its function is as follows. Associates with the EF-Tu.GDP complex and induces the exchange of GDP to GTP. It remains bound to the aminoacyl-tRNA.EF-Tu.GTP complex up to the GTP hydrolysis stage on the ribosome. The protein is Elongation factor Ts (tsf) of Treponema pallidum (strain Nichols).